The sequence spans 412 residues: Glutamyl-tRNA reductase (412 aa).

Substrate is bound by residues 52–55, Ser-108, 113–115, and Gln-119; these read TCNR and EYE. Cys-53 acts as the Nucleophile in catalysis. NADP(+) is bound at residue 189–194; the sequence is GAGEIG.

This sequence belongs to the glutamyl-tRNA reductase family. In terms of assembly, homodimer.

The enzyme catalyses (S)-4-amino-5-oxopentanoate + tRNA(Glu) + NADP(+) = L-glutamyl-tRNA(Glu) + NADPH + H(+). Its pathway is porphyrin-containing compound metabolism; protoporphyrin-IX biosynthesis; 5-aminolevulinate from L-glutamyl-tRNA(Glu): step 1/2. Catalyzes the NADPH-dependent reduction of glutamyl-tRNA(Glu) to glutamate 1-semialdehyde (GSA). The protein is Glutamyl-tRNA reductase of Sulfurisphaera tokodaii (strain DSM 16993 / JCM 10545 / NBRC 100140 / 7) (Sulfolobus tokodaii).